Consider the following 45-residue polypeptide: Putative purine permease 9 (45 aa).

Not detected in seedlings, leaves, embryos or root and shoot meristems.

The sequence is that of Putative purine permease 9 from Arabidopsis thaliana (Mouse-ear cress).